The primary structure comprises 545 residues: Capsular polysaccharide phosphotransferase SacB (545 aa).

It belongs to the stealth family.

May be the polymerase that links individual UDP-N-acetyl-D-mannosamine monomers. In serotype A the capsule is composed of repeated units of (alpha 1-6)-linked N-acetyl-D-mannosamine-1-phosphate. The chain is Capsular polysaccharide phosphotransferase SacB (sacB) from Neisseria meningitidis serogroup A.